A 490-amino-acid chain; its full sequence is GTPase Der (490 aa).

EngA-type G domains are found at residues 3 to 166 (PVVA…MDDV) and 203 to 376 (IKLA…DSST). GTP contacts are provided by residues 9–16 (GRPNVGKS), 56–60 (DTGGI), 118–121 (NKTD), 209–216 (GRPNVGKS), 256–260 (DTAGV), and 321–324 (NKWD). Positions 377–461 (RRVSTAMLTR…PIRIQFKEGE (85 aa)) constitute a KH-like domain.

This sequence belongs to the TRAFAC class TrmE-Era-EngA-EngB-Septin-like GTPase superfamily. EngA (Der) GTPase family. Associates with the 50S ribosomal subunit.

Functionally, GTPase that plays an essential role in the late steps of ribosome biogenesis. This chain is GTPase Der, found in Salmonella choleraesuis (strain SC-B67).